Reading from the N-terminus, the 194-residue chain is Glycerol-3-phosphate acyltransferase (194 aa).

The next 6 helical transmembrane spans lie at 3–23 (AGLF…GLLL), 52–72 (VGIL…LLAW), 80–100 (MQAW…FLLF), 112–132 (VFLA…ILLV), 135–155 (WRYI…IIFF), and 162–182 (LLIA…SNIS).

The protein belongs to the PlsY family. Probably interacts with PlsX.

The protein resides in the cell inner membrane. It carries out the reaction an acyl phosphate + sn-glycerol 3-phosphate = a 1-acyl-sn-glycero-3-phosphate + phosphate. It functions in the pathway lipid metabolism; phospholipid metabolism. Catalyzes the transfer of an acyl group from acyl-phosphate (acyl-PO(4)) to glycerol-3-phosphate (G3P) to form lysophosphatidic acid (LPA). This enzyme utilizes acyl-phosphate as fatty acyl donor, but not acyl-CoA or acyl-ACP. This Trichlorobacter lovleyi (strain ATCC BAA-1151 / DSM 17278 / SZ) (Geobacter lovleyi) protein is Glycerol-3-phosphate acyltransferase.